A 208-amino-acid polypeptide reads, in one-letter code: MKPIQKLSLFRLLPLSCVLLLTACTLTQPGGTGSADSPQWRAHTQQLQQLNQYQTRGSFAYLSNEKKVYARFFWQQYHPERYRLLLTNPLGSTELELIVQPNMTQLTDSQGKKYFSDNPEEIIYQFTNMDIPLDNLRHWITGLPGDAKNFKLDANYLLKTVNYQQNGATWQVNYQSYDTSTTPALPNRLELIQGDRRIKLKMDNWTTK.

A signal peptide spans 1–23; it reads MKPIQKLSLFRLLPLSCVLLLTA. A lipid anchor (N-palmitoyl cysteine) is attached at cysteine 24. Residue cysteine 24 is the site of S-diacylglycerol cysteine attachment.

Belongs to the LolB family. Monomer.

Its subcellular location is the cell outer membrane. Plays a critical role in the incorporation of lipoproteins in the outer membrane after they are released by the LolA protein. In Photorhabdus laumondii subsp. laumondii (strain DSM 15139 / CIP 105565 / TT01) (Photorhabdus luminescens subsp. laumondii), this protein is Outer-membrane lipoprotein LolB.